The primary structure comprises 471 residues: Glutamate--tRNA ligase (471 aa).

A 'HIGH' region motif is present at residues 9-19 (PSPTGYLHVGG). Zn(2+) is bound by residues cysteine 98, cysteine 100, cysteine 125, and histidine 127. Residues 237–241 (KLSKR) carry the 'KMSKS' region motif. Lysine 240 lines the ATP pocket.

It belongs to the class-I aminoacyl-tRNA synthetase family. Glutamate--tRNA ligase type 1 subfamily. In terms of assembly, monomer. Requires Zn(2+) as cofactor.

The protein localises to the cytoplasm. The catalysed reaction is tRNA(Glu) + L-glutamate + ATP = L-glutamyl-tRNA(Glu) + AMP + diphosphate. Catalyzes the attachment of glutamate to tRNA(Glu) in a two-step reaction: glutamate is first activated by ATP to form Glu-AMP and then transferred to the acceptor end of tRNA(Glu). In Escherichia coli O157:H7, this protein is Glutamate--tRNA ligase.